Here is a 391-residue protein sequence, read N- to C-terminus: MAIFRDYSINPTEHDRTIGDRRRHRELVEKAIKDNLADIVSEESIIGESKSKKIKIPIRGLKEYKFLYGNNSSSVGSGTGNEKKGDIIGKEQMGNGSKGKGKGAGNSEGEDIYETEVTIEEVFSYLLEDLNLPNLDKKKYSEIVTDSSKKKAGYQKYGIRPRLAKKRTVIEKIKREQSRKRAIKELGKDDKVERLPFSEEDLRYHRIKEKPKKECNAAIMCVMDCSGSMDSTKKYLARSFFFILSKFIRMKYVNVEIAFISHSTVGREVTETEFFHKVESGGTYISSGLNTAMDIIKERFNPATWNIYGFYVSDGDNFTEDDERAIKSMRKFCEIANMIGYAEILPYSYSGTMKYKFDNYVKDKNFISSTIRNKEDLWPVLKKMLIKELKE.

2 disordered regions span residues M1–D20 and V75–G109. Positions G96–N106 are enriched in gly residues.

The protein belongs to the UPF0229 family.

This Clostridium acetobutylicum (strain ATCC 824 / DSM 792 / JCM 1419 / IAM 19013 / LMG 5710 / NBRC 13948 / NRRL B-527 / VKM B-1787 / 2291 / W) protein is UPF0229 protein CA_C0580.